Here is a 307-residue protein sequence, read N- to C-terminus: Myeloid-associated differentiation marker homolog (307 aa).

2 MARVEL domains span residues 15–148 (TLKS…AKPG) and 153–304 (YMAT…RLIF). Transmembrane regions (helical) follow at residues 19 to 39 (PVGILRILEVIFACVTFSLVV), 51 to 71 (LCMFCWCFCFAVSLVILIVEF), 85 to 105 (FPITFAMYAVLMCLSATVIYP), 123 to 143 (IVAIVFSCLTTLAYIIEVSLT), 156 to 176 (TTPGLLKVLETFIACIIFVFI), 190 to 210 (WCLAVYCICFILSIVVIILCV), 228 to 248 (YALLAVLMYASAMIIWPIFSF), and 278 to 298 (MVAVAVLTAVNLIAYVMDLVY).

The protein belongs to the MAL family.

The protein resides in the membrane. In Xenopus laevis (African clawed frog), this protein is Myeloid-associated differentiation marker homolog (myadm).